A 416-amino-acid chain; its full sequence is Tryptophan synthase beta chain (416 aa).

An N6-(pyridoxal phosphate)lysine modification is found at Lys98.

This sequence belongs to the TrpB family. Tetramer of two alpha and two beta chains. Pyridoxal 5'-phosphate is required as a cofactor.

It catalyses the reaction (1S,2R)-1-C-(indol-3-yl)glycerol 3-phosphate + L-serine = D-glyceraldehyde 3-phosphate + L-tryptophan + H2O. It functions in the pathway amino-acid biosynthesis; L-tryptophan biosynthesis; L-tryptophan from chorismate: step 5/5. In terms of biological role, the beta subunit is responsible for the synthesis of L-tryptophan from indole and L-serine. The chain is Tryptophan synthase beta chain from Ruegeria pomeroyi (strain ATCC 700808 / DSM 15171 / DSS-3) (Silicibacter pomeroyi).